The sequence spans 307 residues: Voltage-dependent anion channel-forming protein sll1024 (307 aa).

A run of 4 helical transmembrane segments spans residues 26–46, 54–74, 226–246, and 247–267; these read VIPA…GVTL, FSIP…LLVF, LIFL…HWAT, and AFVV…GVEI.

The protein belongs to the anion channel-forming bestrophin (TC 1.A.46) family.

Its subcellular location is the cell membrane. This Synechocystis sp. (strain ATCC 27184 / PCC 6803 / Kazusa) protein is Voltage-dependent anion channel-forming protein sll1024.